Reading from the N-terminus, the 379-residue chain is UDP-N-acetylglucosamine--N-acetylmuramyl-(pentapeptide) pyrophosphoryl-undecaprenol N-acetylglucosamine transferase (379 aa).

UDP-N-acetyl-alpha-D-glucosamine contacts are provided by residues 17 to 19, Asn128, Arg169, Ser197, and Gln298; that span reads TGG.

This sequence belongs to the glycosyltransferase 28 family. MurG subfamily.

Its subcellular location is the cell inner membrane. The catalysed reaction is di-trans,octa-cis-undecaprenyl diphospho-N-acetyl-alpha-D-muramoyl-L-alanyl-D-glutamyl-meso-2,6-diaminopimeloyl-D-alanyl-D-alanine + UDP-N-acetyl-alpha-D-glucosamine = di-trans,octa-cis-undecaprenyl diphospho-[N-acetyl-alpha-D-glucosaminyl-(1-&gt;4)]-N-acetyl-alpha-D-muramoyl-L-alanyl-D-glutamyl-meso-2,6-diaminopimeloyl-D-alanyl-D-alanine + UDP + H(+). It functions in the pathway cell wall biogenesis; peptidoglycan biosynthesis. Functionally, cell wall formation. Catalyzes the transfer of a GlcNAc subunit on undecaprenyl-pyrophosphoryl-MurNAc-pentapeptide (lipid intermediate I) to form undecaprenyl-pyrophosphoryl-MurNAc-(pentapeptide)GlcNAc (lipid intermediate II). The polypeptide is UDP-N-acetylglucosamine--N-acetylmuramyl-(pentapeptide) pyrophosphoryl-undecaprenol N-acetylglucosamine transferase (Brucella suis biovar 1 (strain 1330)).